We begin with the raw amino-acid sequence, 327 residues long: Phenylalanine--tRNA ligase alpha subunit (327 aa).

Glu252 is a binding site for Mg(2+).

This sequence belongs to the class-II aminoacyl-tRNA synthetase family. Phe-tRNA synthetase alpha subunit type 1 subfamily. Tetramer of two alpha and two beta subunits. It depends on Mg(2+) as a cofactor.

Its subcellular location is the cytoplasm. The catalysed reaction is tRNA(Phe) + L-phenylalanine + ATP = L-phenylalanyl-tRNA(Phe) + AMP + diphosphate + H(+). The sequence is that of Phenylalanine--tRNA ligase alpha subunit from Yersinia pestis bv. Antiqua (strain Antiqua).